A 124-amino-acid chain; its full sequence is Large ribosomal subunit protein eL31 (124 aa).

It belongs to the eukaryotic ribosomal protein eL31 family.

This Aedes aegypti (Yellowfever mosquito) protein is Large ribosomal subunit protein eL31 (RpL31).